A 332-amino-acid chain; its full sequence is Tumor necrosis factor receptor superfamily member 6 (332 aa).

An N-terminal signal peptide occupies residues 1–16 (MSGIWVLLSLVFTCIA). Topologically, residues 17-175 (GPLSKGDDAQ…VFQSAGSRSN (159 aa)) are extracellular. N38 carries an N-linked (GlcNAc...) asparagine glycan. TNFR-Cys repeat units follow at residues 45–81 (ECPE…PQCV), 82–125 (PCSE…NTKC), and 126–164 (RCKP…TKCR). 9 disulfide bridges follow: C46-C57, C58-C71, C61-C80, C83-C99, C102-C117, C105-C125, C127-C141, C144-C155, and C147-C163. The N-linked (GlcNAc...) asparagine glycan is linked to N116. A helical transmembrane segment spans residues 176–192 (LHWLWALLILIPVPALV). Over 193-332 (YREVKRRCRR…NSQNENESLT (140 aa)) the chain is Cytoplasmic. C200 is lipidated: S-palmitoyl cysteine. The interval 210 to 314 (PITSNAEEVP…DKINDIVQKD (105 aa)) is interaction with HIPK3. The residue at position 212 (T212) is a Phosphothreonine. The segment at 227 to 251 (GKYITRIAEQMKITEVKDFVRKNGI) is interaction with CALM. The Death domain maps to 227-311 (GKYITRIAEQ…ALADKINDIV (85 aa)).

Component of the death-induced signaling complex (DISC) composed of cell surface receptor FAS/CD95, adapter protein FADD and the CASP8 protease; recruitment of CASP8 to the complex is required for processing of CASP8 into the p18 and p10 subunits. Interacts directly (via DED domain) with NOL3 (via CARD domain); inhibits death-inducing signaling complex (DISC) assembly by inhibiting the increase in FAS-FADD binding induced by FAS activation. Binds DAXX. Interacts with HIPK3. Part of a complex containing HIPK3 and FADD. Binds RIPK1 and FAIM2. Interacts with BABAM2 and FEM1B. Interacts with CALM. In the absence of stimulation, interacts with BIRC2, DDX3X and GSK3B. The interaction with BIRC2 and DDX3X is further enhanced upon receptor stimulation and accompanied by DDX3X and BIRC2 cleavage. Post-translationally, palmitoylated. Palmitoylation by ZDHHC7 prevents the lysosomal degradation of FAS regulating its expression at the plasma membrane.

The protein localises to the cell membrane. It is found in the membrane raft. Receptor for TNFSF6/FASLG. The adapter molecule FADD recruits caspase CASP8 to the activated receptor. The resulting death-inducing signaling complex (DISC) performs CASP8 proteolytic activation which initiates the subsequent cascade of caspases (aspartate-specific cysteine proteases) mediating apoptosis. FAS-mediated apoptosis may have a role in the induction of peripheral tolerance, in the antigen-stimulated suicide of mature T-cells, or both. The protein is Tumor necrosis factor receptor superfamily member 6 (FAS) of Sus scrofa (Pig).